The chain runs to 350 residues: Biotin synthase (350 aa).

In terms of domain architecture, Radical SAM core spans 54-278; the sequence is REIQLSTLLS…TMPQSYVRLS (225 aa). C69, C73, and C76 together coordinate [4Fe-4S] cluster. [2Fe-2S] cluster is bound by residues C113, C144, C204, and R276.

The protein belongs to the radical SAM superfamily. Biotin synthase family. Homodimer. Requires [4Fe-4S] cluster as cofactor. [2Fe-2S] cluster is required as a cofactor.

The catalysed reaction is (4R,5S)-dethiobiotin + (sulfur carrier)-SH + 2 reduced [2Fe-2S]-[ferredoxin] + 2 S-adenosyl-L-methionine = (sulfur carrier)-H + biotin + 2 5'-deoxyadenosine + 2 L-methionine + 2 oxidized [2Fe-2S]-[ferredoxin]. The protein operates within cofactor biosynthesis; biotin biosynthesis; biotin from 7,8-diaminononanoate: step 2/2. Its function is as follows. Catalyzes the conversion of dethiobiotin (DTB) to biotin by the insertion of a sulfur atom into dethiobiotin via a radical-based mechanism. This is Biotin synthase from Neisseria meningitidis serogroup B (strain ATCC BAA-335 / MC58).